The chain runs to 364 residues: Probable dual-specificity RNA methyltransferase RlmN (364 aa).

Catalysis depends on E106, which acts as the Proton acceptor. A Radical SAM core domain is found at 112–351 (YPHRNTVCIS…CTVRDTRGRE (240 aa)). A disulfide bridge connects residues C119 and C356. [4Fe-4S] cluster contacts are provided by C126, C130, and C133. S-adenosyl-L-methionine is bound by residues 177–178 (GE), S211, 234–236 (SLH), and N313. C356 functions as the S-methylcysteine intermediate in the catalytic mechanism.

The protein belongs to the radical SAM superfamily. RlmN family. Requires [4Fe-4S] cluster as cofactor.

It is found in the cytoplasm. It catalyses the reaction adenosine(2503) in 23S rRNA + 2 reduced [2Fe-2S]-[ferredoxin] + 2 S-adenosyl-L-methionine = 2-methyladenosine(2503) in 23S rRNA + 5'-deoxyadenosine + L-methionine + 2 oxidized [2Fe-2S]-[ferredoxin] + S-adenosyl-L-homocysteine. The enzyme catalyses adenosine(37) in tRNA + 2 reduced [2Fe-2S]-[ferredoxin] + 2 S-adenosyl-L-methionine = 2-methyladenosine(37) in tRNA + 5'-deoxyadenosine + L-methionine + 2 oxidized [2Fe-2S]-[ferredoxin] + S-adenosyl-L-homocysteine. Functionally, specifically methylates position 2 of adenine 2503 in 23S rRNA and position 2 of adenine 37 in tRNAs. This chain is Probable dual-specificity RNA methyltransferase RlmN, found in Mycolicibacterium paratuberculosis (strain ATCC BAA-968 / K-10) (Mycobacterium paratuberculosis).